A 219-amino-acid polypeptide reads, in one-letter code: Response regulator ArlR (219 aa).

Positions 3-116 constitute a Response regulatory domain; it reads NILIVEDEQN…ELFARIRAVL (114 aa). D52 carries the post-translational modification 4-aspartylphosphate. The ompR/PhoB-type DNA-binding region spans 122-219; that stretch reads KDIIDINGIK…TVRGVGYVIR (98 aa).

Phosphorylated by ArlS.

The protein resides in the cytoplasm. Member of the two-component regulatory system ArlS/ArlR. This Staphylococcus haemolyticus (strain JCSC1435) protein is Response regulator ArlR (arlR).